We begin with the raw amino-acid sequence, 225 residues long: NAD(P)H-quinone oxidoreductase subunit K, chloroplastic (225 aa).

The [4Fe-4S] cluster site is built by Cys43, Cys44, Cys108, and Cys139.

This sequence belongs to the complex I 20 kDa subunit family. As to quaternary structure, NDH is composed of at least 16 different subunits, 5 of which are encoded in the nucleus. It depends on [4Fe-4S] cluster as a cofactor.

The protein resides in the plastid. It localises to the chloroplast thylakoid membrane. The enzyme catalyses a plastoquinone + NADH + (n+1) H(+)(in) = a plastoquinol + NAD(+) + n H(+)(out). The catalysed reaction is a plastoquinone + NADPH + (n+1) H(+)(in) = a plastoquinol + NADP(+) + n H(+)(out). NDH shuttles electrons from NAD(P)H:plastoquinone, via FMN and iron-sulfur (Fe-S) centers, to quinones in the photosynthetic chain and possibly in a chloroplast respiratory chain. The immediate electron acceptor for the enzyme in this species is believed to be plastoquinone. Couples the redox reaction to proton translocation, and thus conserves the redox energy in a proton gradient. This is NAD(P)H-quinone oxidoreductase subunit K, chloroplastic from Amborella trichopoda.